Consider the following 66-residue polypeptide: Large ribosomal subunit protein bL33c (66 aa).

Belongs to the bacterial ribosomal protein bL33 family.

It localises to the plastid. The protein resides in the chloroplast. This is Large ribosomal subunit protein bL33c from Chloranthus spicatus (Chulantree).